We begin with the raw amino-acid sequence, 497 residues long: Probable cytosol aminopeptidase (497 aa).

Positions 265 and 270 each coordinate Mn(2+). K277 is an active-site residue. D288, D347, and E349 together coordinate Mn(2+). R351 is an active-site residue.

It belongs to the peptidase M17 family. Mn(2+) serves as cofactor.

It is found in the cytoplasm. It carries out the reaction Release of an N-terminal amino acid, Xaa-|-Yaa-, in which Xaa is preferably Leu, but may be other amino acids including Pro although not Arg or Lys, and Yaa may be Pro. Amino acid amides and methyl esters are also readily hydrolyzed, but rates on arylamides are exceedingly low.. The catalysed reaction is Release of an N-terminal amino acid, preferentially leucine, but not glutamic or aspartic acids.. Functionally, presumably involved in the processing and regular turnover of intracellular proteins. Catalyzes the removal of unsubstituted N-terminal amino acids from various peptides. The protein is Probable cytosol aminopeptidase of Geobacillus thermodenitrificans (strain NG80-2).